Consider the following 288-residue polypeptide: Glycine--tRNA ligase alpha subunit (288 aa).

It belongs to the class-II aminoacyl-tRNA synthetase family. As to quaternary structure, tetramer of two alpha and two beta subunits.

The protein resides in the cytoplasm. The enzyme catalyses tRNA(Gly) + glycine + ATP = glycyl-tRNA(Gly) + AMP + diphosphate. The polypeptide is Glycine--tRNA ligase alpha subunit (Rickettsia rickettsii (strain Iowa)).